We begin with the raw amino-acid sequence, 798 residues long: Peroxisome proliferator-activated receptor gamma coactivator 1-alpha (798 aa).

Position 79 is an N6-acetyllysine (Lys-79). The segment at 100-140 is disordered; the sequence is PVDEDGLPSFDALTDGDVTTDNEASPSSMPDGTPPPQEAEE. Residues 116–129 are compositionally biased toward polar residues; the sequence is DVTTDNEASPSSMP. The LXXLL motif signature appears at 144–148; sequence LKKLL. An N6-acetyllysine modification is found at Lys-146. At Thr-178 the chain carries Phosphothreonine; by AMPK. Lys-184 is modified (N6-acetyllysine). The interval 213–277 is disordered; the sequence is YLTTNDDPPH…NDPKGSPFEN (65 aa). Positions 219-237 are enriched in basic and acidic residues; the sequence is DPPHTKPTENRNSSRDKCT. N6-acetyllysine is present on residues Lys-254, Lys-271, Lys-278, and Lys-321. The interval 290–351 is disordered; that stretch reads GTAGLTPPTT…NNSTKKGPEQ (62 aa). The interval 293–339 is interaction with PPARG; the sequence is GLTPPTTPPHKANQDNPFRASPKLKSSCKTVVPPPSKKPRYSESSGT. Positions 334-346 are enriched in polar residues; it reads SESSGTQGNNSTK. N6-acetyllysine is present on residues Lys-347, Lys-413, Lys-442, and Lys-451. Residues 350 to 798 are mediates interaction with RNF34; the sequence is EQSELYAQLS…LKEAQRSLRR (449 aa). Ser-539 is subject to Phosphoserine; by AMPK. Disordered stretches follow at residues 542-599, 613-639, and 650-669; these read SFNS…SSRS, HRNSPLYVRSRSRSPYSRRPRYDSYEE, and YRREYEKRESERAKQRERQR. Residues 563–578 show a composition bias toward basic residues; the sequence is QRMRSRSRSFSRHRSC. Over residues 579–599 the composition is skewed to low complexity; that stretch reads SRSPYSRSRSRSPGSRSSSRS. Over residues 622–631 the composition is skewed to basic residues; the sequence is SRSRSPYSRR. The 77-residue stretch at 677-753 folds into the RRM domain; sequence RVIYVGKIRP…TDFELYFCGR (77 aa). An N6-acetyllysine mark is found at Lys-758 and Lys-779.

In terms of assembly, homooligomer. Interacts with MYBBP1A; inhibits MYBBP1A transcriptional activation. Interacts with PRDM16, LPIN1 and PML. Interacts (via LXXLL motif) with RORA and RORC (via AF-2 motif); activates RORA and RORC transcriptional activation. Interacts with LRPPRC. Interacts with FOXO1. Interacts with NR5A2. Phosphorylation by AMPK in skeletal muscle increases activation of its own promoter. Phosphorylated by CLK2. Post-translationally, heavily acetylated by KAT2A/GCN5 under conditions of high nutrients, leading to inactivation of PPARGC1A. Deacetylated by SIRT1 in low nutrients/high NAD conditions, leading to its activation. In terms of processing, ubiquitinated. Ubiquitination by RNF34 induces proteasomal degradation. Heart, skeletal muscle, liver and kidney. Expressed at lower levels in brain and pancreas and at very low levels in the intestine and white adipose tissue. In skeletal muscle, levels were lower in obese than in lean subjects and fasting induced a 2-fold increase in levels in the skeletal muscle in obese subjects.

It is found in the nucleus. It localises to the PML body. The protein resides in the cytoplasm. Its function is as follows. Transcriptional coactivator for steroid receptors and nuclear receptors. Greatly increases the transcriptional activity of PPARG and thyroid hormone receptor on the uncoupling protein promoter. Can regulate key mitochondrial genes that contribute to the program of adaptive thermogenesis. Plays an essential role in metabolic reprogramming in response to dietary availability through coordination of the expression of a wide array of genes involved in glucose and fatty acid metabolism. Acts as a key regulator of gluconeogenesis: stimulates hepatic gluconeogenesis by increasing the expression of gluconeogenic enzymes, and acting together with FOXO1 to promote the fasting gluconeogenic program. Induces the expression of PERM1 in the skeletal muscle in an ESRRA-dependent manner. Also involved in the integration of the circadian rhythms and energy metabolism. Required for oscillatory expression of clock genes, such as BMAL1 and NR1D1, through the coactivation of RORA and RORC, and metabolic genes, such as PDK4 and PEPCK. The chain is Peroxisome proliferator-activated receptor gamma coactivator 1-alpha (PPARGC1A) from Homo sapiens (Human).